A 374-amino-acid polypeptide reads, in one-letter code: Regulator of G-protein signaling 20 (374 aa).

Positions 1–11 are enriched in polar residues; sequence MPRLSQDNQQG. 2 disordered regions span residues 1–21 and 135–158; these read MPRL…RPSR and PPGG…PPMG. The segment covering 12-21 has biased composition (basic residues); that stretch reads HQKHFSRPSR. The 117-residue stretch at 248–364 folds into the RGS domain; the sequence is SFDKLMLTPA…MNSALYKDLL (117 aa).

As to quaternary structure, forms a complex with G(alpha)z/i2 subunits and mu-opioid receptors; the formation of this complex results in mu-opioid receptor desensitization. Interacts with OPRM1. Fatty acylated. Heavily palmitoylated in the cysteine string motif. Post-translationally, N- and O-glycosylated in synapsomal membranes. In terms of processing, serine phosphorylated in synapsomal membranes. Sumoylated with SUMO1 and SUMO2 in synaptosomes. The sumoylated forms act as a scaffold for sequestering mu-opioid receptor-activated G(alpha) subunits. Retinal-specific. Expressed throughout the retina, including photoreceptors.

The protein localises to the membrane. It localises to the nucleus. Its subcellular location is the cytoplasm. In terms of biological role, inhibits signal transduction by increasing the GTPase activity of G protein alpha subunits thereby driving them into their inactive GDP-bound form. Binds selectively to G(z)-alpha and G(alpha)-i2 subunits, accelerates their GTPase activity and regulates their signaling activities. The G(z)-alpha activity is inhibited by the phosphorylation and palmitoylation of the G-protein. Negatively regulates mu-opioid receptor-mediated activation of the G-proteins. The sequence is that of Regulator of G-protein signaling 20 (RGS20) from Bos taurus (Bovine).